Consider the following 801-residue polypeptide: Putative mRNA-capping enzyme P5 (801 aa).

The protein belongs to the phytoreovirus protein P5 family.

Its subcellular location is the virion. The protein localises to the host cytoplasm. The catalysed reaction is a 5'-end diphospho-ribonucleoside in mRNA + GTP + H(+) = a 5'-end (5'-triphosphoguanosine)-ribonucleoside in mRNA + diphosphate. Its pathway is mRNA processing; mRNA capping. Enzyme involved in mRNA capping (Potential). Binds to GTP and might have guanylyltransferase activity. Together with the RNA-directed RNA polymerase P1 and protein P7, forms an transcriptional complex positioned near the channels situated at each of the five-fold vertices of the core. This Alopecurus aequalis (Barnyard grass) protein is Putative mRNA-capping enzyme P5.